The chain runs to 527 residues: GMP synthase [glutamine-hydrolyzing] (527 aa).

Positions 11 to 209 (RILILDFGSQ…VLNICGCENL (199 aa)) constitute a Glutamine amidotransferase type-1 domain. Residue Cys88 is the Nucleophile of the active site. Residues His183 and Glu185 contribute to the active site. Positions 210–402 (WTSANIIEDA…LGLPYNMLYR (193 aa)) constitute a GMPS ATP-PPase domain. 237–243 (SGGVDSS) contributes to the ATP binding site.

Homodimer.

It carries out the reaction XMP + L-glutamine + ATP + H2O = GMP + L-glutamate + AMP + diphosphate + 2 H(+). It participates in purine metabolism; GMP biosynthesis; GMP from XMP (L-Gln route): step 1/1. Catalyzes the synthesis of GMP from XMP. This chain is GMP synthase [glutamine-hydrolyzing], found in Photobacterium profundum (strain SS9).